The chain runs to 273 residues: uncharacterized protein (273 aa).

10 to 34 contacts NAD(+); it reads VITGAATGIGQATAEVFANEGARVI. S142 contributes to the substrate binding site. The active-site Proton acceptor is Y155.

This sequence belongs to the short-chain dehydrogenases/reductases (SDR) family.

This is an uncharacterized protein from Bacillus subtilis (strain 168).